The primary structure comprises 268 residues: TATA-box-binding protein (268 aa).

A compositionally biased stretch (polar residues) spans 1–24 (MDSLTTHPATAQQARAFTSPSSLS). Positions 1-86 (MDSLTTHPAT…TPAATPGASA (86 aa)) are disordered. Low complexity predominate over residues 50-86 (NGQSANGNVNGQQQGANAANGNGVMPATPAATPGASA). 2 tandem repeats follow at residues 95–171 (LQNI…ARII) and 185–262 (IQNI…YPVL).

This sequence belongs to the TBP family. In terms of assembly, belongs to the TFIID complex together with the TBP-associated factors (TAFs). Binds DNA as monomer.

The protein resides in the nucleus. In terms of biological role, general transcription factor that functions at the core of the DNA-binding multiprotein factor TFIID. Binding of TFIID to the TATA box is the initial transcriptional step of the pre-initiation complex (PIC), playing a role in the activation of eukaryotic genes transcribed by RNA polymerase II. In Emericella nidulans (strain FGSC A4 / ATCC 38163 / CBS 112.46 / NRRL 194 / M139) (Aspergillus nidulans), this protein is TATA-box-binding protein (tbpA).